We begin with the raw amino-acid sequence, 645 residues long: Putative bifunctional exonuclease/endonuclease protein MT2247 (645 aa).

The region spanning 44 to 207 (VVVDLETTGG…DDARATVDVL (164 aa)) is the Exonuclease domain. The 79-residue stretch at 248–326 (HRPGVYLFRG…LSTHAPPYNR (79 aa)) folds into the GIY-YIG domain. The segment at 603–645 (WQSDLPTEPHPSREQLFGRTGVDCRTGPPQPLLPGRQPFSTAG) is disordered. Residues 635-645 (LPGRQPFSTAG) are compositionally biased toward low complexity.

The protein is Putative bifunctional exonuclease/endonuclease protein MT2247 of Mycobacterium tuberculosis (strain CDC 1551 / Oshkosh).